A 428-amino-acid polypeptide reads, in one-letter code: Trigger factor (428 aa).

A PPIase FKBP-type domain is found at 163–248 (GDTVVIDFEG…LHEIKTKQLP (86 aa)).

Belongs to the FKBP-type PPIase family. Tig subfamily.

It is found in the cytoplasm. The catalysed reaction is [protein]-peptidylproline (omega=180) = [protein]-peptidylproline (omega=0). Its function is as follows. Involved in protein export. Acts as a chaperone by maintaining the newly synthesized protein in an open conformation. Functions as a peptidyl-prolyl cis-trans isomerase. The polypeptide is Trigger factor (Anoxybacillus flavithermus (strain DSM 21510 / WK1)).